The primary structure comprises 389 residues: Glutaryl-CoA dehydrogenase (389 aa).

2 residues coordinate substrate: arginine 87 and asparagine 91. Residues 126 to 129 (FGIT), serine 135, and 159 to 161 (WIS) contribute to the FAD site. Serine 135 is a binding site for substrate. Position 181 (serine 181) interacts with substrate. FAD contacts are provided by residues arginine 271, 281 to 284 (FQMN), arginine 340, alanine 344, and 367 to 371 (EGSAN). Glutamate 367 serves as the catalytic Proton acceptor. Residue arginine 385 participates in substrate binding.

It belongs to the acyl-CoA dehydrogenase family. In terms of assembly, homotetramer. Requires FAD as cofactor.

The enzyme catalyses glutaryl-CoA + A = (2E)-glutaconyl-CoA + AH2. The protein operates within aromatic compound metabolism; benzoyl-CoA degradation. Its activity is regulated as follows. Inhibited by glutaconyl-CoA. Catalyzes the dehydrogenation of Glutaryl-CoA to glutaconyl-CoA. The sequence is that of Glutaryl-CoA dehydrogenase (Acd) from Desulfococcus multivorans.